The following is a 312-amino-acid chain: Ornithine carbamoyltransferase (312 aa).

Carbamoyl phosphate-binding positions include 50 to 53 (STRT), Gln-77, Arg-101, and 128 to 131 (HPCQ). L-ornithine contacts are provided by residues Asn-159, Asp-223, and 227–228 (SM). Carbamoyl phosphate is bound by residues 263–264 (CL) and Arg-291.

It belongs to the aspartate/ornithine carbamoyltransferase superfamily. OTCase family.

It localises to the cytoplasm. The catalysed reaction is carbamoyl phosphate + L-ornithine = L-citrulline + phosphate + H(+). The protein operates within amino-acid biosynthesis; L-arginine biosynthesis; L-arginine from L-ornithine and carbamoyl phosphate: step 1/3. In terms of biological role, reversibly catalyzes the transfer of the carbamoyl group from carbamoyl phosphate (CP) to the N(epsilon) atom of ornithine (ORN) to produce L-citrulline. This Acidothermus cellulolyticus (strain ATCC 43068 / DSM 8971 / 11B) protein is Ornithine carbamoyltransferase.